An 89-amino-acid polypeptide reads, in one-letter code: uncharacterized protein (89 aa).

A run of 3 helical transmembrane segments spans residues 5–27 (TLTEYCLLIFFTGFYLAVTGFTA), 32–51 (LYIGIALIYIFSHIFSKRLL), and 63–85 (LFFSVLAIIGSVFITVLCIALVA).

Its subcellular location is the cell membrane. This is an uncharacterized protein from Bacillus subtilis (strain 168).